The primary structure comprises 438 residues: Adenylosuccinate synthetase (438 aa).

GTP is bound by residues 13–19 (GDEGKGK) and 41–43 (GHT). Residue Asp14 is the Proton acceptor of the active site. Residues Asp14 and Gly41 each contribute to the Mg(2+) site. IMP contacts are provided by residues 14-17 (DEGK), 39-42 (NAGH), Thr130, Arg144, Gln225, Thr240, and Arg310. His42 serves as the catalytic Proton donor. Residue 306–312 (ATTGRLR) coordinates substrate. GTP is bound by residues Arg312, 338–340 (KLD), and 421–423 (STG).

The protein belongs to the adenylosuccinate synthetase family. In terms of assembly, homodimer. The cofactor is Mg(2+).

The protein localises to the cytoplasm. It catalyses the reaction IMP + L-aspartate + GTP = N(6)-(1,2-dicarboxyethyl)-AMP + GDP + phosphate + 2 H(+). Its pathway is purine metabolism; AMP biosynthesis via de novo pathway; AMP from IMP: step 1/2. In terms of biological role, plays an important role in the de novo pathway of purine nucleotide biosynthesis. Catalyzes the first committed step in the biosynthesis of AMP from IMP. This chain is Adenylosuccinate synthetase, found in Vibrio parahaemolyticus serotype O3:K6 (strain RIMD 2210633).